Consider the following 209-residue polypeptide: Large ribosomal subunit protein uL3 (209 aa).

Q150 is modified (N5-methylglutamine).

The protein belongs to the universal ribosomal protein uL3 family. In terms of assembly, part of the 50S ribosomal subunit. Forms a cluster with proteins L14 and L19. Post-translationally, methylated by PrmB.

One of the primary rRNA binding proteins, it binds directly near the 3'-end of the 23S rRNA, where it nucleates assembly of the 50S subunit. The sequence is that of Large ribosomal subunit protein uL3 from Aliivibrio salmonicida (strain LFI1238) (Vibrio salmonicida (strain LFI1238)).